Consider the following 858-residue polypeptide: MSASVAEPPPALSRKAEFKAAKAELLARFKSANHVTPLMHALSRATDDALRSLWQECGLPATLALVAVGGFGRGELSPHSDVDILVLLPDAHASELDERIERFIGMAWDLGLEIGSSVRTVDQCIEEASHDVTVQTSLLEARRIVGSTALFERFMLRYREALDARAFFQAKVLEMRQRHAKFQNTPYSLEPNVKESPGGLRDLQTILWIARAAGFGSSWRELDTRGLITDREARELRRNEGFLKTLRARLHVIAGRRQDILVFDLQTQAAESFGYQPTSAKRASEQLMRRYYWAAKAVTQLATILIQNIEAQLFPATSGVTRVLSPGRFVEKQGMLEIAADDVFERHPDAILEAFLLYEATRGVKGLSARTLRALYNSRDVMNNAWRRDPRNRHTFMQILQQPEGITHAFRLMNQTSVLGRYLLNFRRIVGQMQHDLYHVYTVDQHILMVLRNIRRFAVAEHAHEYPFCSQLIVNFERPWVLYVAALFHDIAKGRGGDHSALGMADARRFCREHGIEGDDAALVVWLVQHHLTMSQVAQKQDTSDPVVIKRFAELVGSERRLTALYLLTVADIRGTSPKVWNTWKGKLLEDLYRATLAVLGGAQPDAHSELKTRQEEALALLRLETVPPDAHRALWDQLDVGYFLRHDAADIAWQTRVLYRHVAADTAIVRARPSPVGDALQVLVYVKDRSDLFAGICAYFDRNGLSVLDARVNTTRHGYALDNFIVTQTEHDVQYRDIANLVEQQLAARLAESAPLPEPSKGRLSRLSRTFPITPRVDLRADERGQYYILSVSANDRPGLLYSIARVLAEHRVGVHAARINTLGERVEDVFMLDGTGLSDNRLQIQVETELLRAIAV.

The tract at residues Met-1–Leu-324 is uridylyltransferase. Residues Ser-325–Leu-681 form a uridylyl-removing region. One can recognise an HD domain in the interval Val-443–Leu-565. ACT domains follow at residues Gln-682–Ser-761 and Ile-790–Val-858.

This sequence belongs to the GlnD family. Requires Mg(2+) as cofactor.

It catalyses the reaction [protein-PII]-L-tyrosine + UTP = [protein-PII]-uridylyl-L-tyrosine + diphosphate. It carries out the reaction [protein-PII]-uridylyl-L-tyrosine + H2O = [protein-PII]-L-tyrosine + UMP + H(+). With respect to regulation, uridylyltransferase (UTase) activity is inhibited by glutamine, while glutamine activates uridylyl-removing (UR) activity. Its function is as follows. Modifies, by uridylylation and deuridylylation, the PII regulatory proteins (GlnB and homologs), in response to the nitrogen status of the cell that GlnD senses through the glutamine level. Under low glutamine levels, catalyzes the conversion of the PII proteins and UTP to PII-UMP and PPi, while under higher glutamine levels, GlnD hydrolyzes PII-UMP to PII and UMP (deuridylylation). Thus, controls uridylylation state and activity of the PII proteins, and plays an important role in the regulation of nitrogen assimilation and metabolism. The sequence is that of Bifunctional uridylyltransferase/uridylyl-removing enzyme from Burkholderia mallei (strain ATCC 23344).